Consider the following 272-residue polypeptide: MDLTGSAFVIGASGIGKACALAFARYGVRGIVIADLTLEAASAVAAECKSQATHPHFLAEAVAIDVTKEESVYQAIAYAHQVLGRIDYAVNSAGVGVQLANEIAEASVSEFEKMFKVNVTGTFIVTRALSALMKTQDPVPVDEAVPARGVSRGSIVNVGSASGFVATPGMVQYTAAKHAVVGITKNAALDNAKHGIRVNSVCPSWVDTPMIRKAMDDIPELGEMIQKAVPLGRIALAEEVADAVMFLSSPKASYATGCNMILDGGTTLAAHV.

Residues I15, D65, R127, Y173, K177, V206, and T208 each coordinate NADP(+). The active-site Proton donor is the Y173. K177 serves as the catalytic Lowers pKa of active site Tyr.

It belongs to the short-chain dehydrogenases/reductases (SDR) family.

Its function is as follows. Short-chain dehydrogenase; part of the gene cluster that mediates the biosynthesis of sordarial, a salicylic aldehyde structurally related to the phytotoxin pyriculol. The most interesting aspect of this pathway is formation of an aromatic product from the highly reducing polyketide synthase srdA. SrdA synthesizes a reduced polyketide chain from one molecule of acetyl-CoA and five molecules of malonyl-CoA. The polyketide chain is then reductively released as an aldehyde. The oxidoreductases srdC, srdD and srdE then oxidize one of the hydroxy groups to facilitate the intramolecular aldol condensation, followed by dehydration to yield a salicylic aldehyde. This aldehyde can undergo facile reduction by endogenous reductases to yield the alcohol 1-hydroxy-2-hydroxymethyl-3-pent-1,3-dienylbenzene. The flavin-dependent srdI counteract against the propensity of the aldehydes to be reduced under physiological conditions and is responsible for reoxidizing 1-hydroxy-2-hydroxymethyl-3-pent-1,3-dienylbenzene back to the salicylic aldehyde. This salicylic aldehyde is then selectively epoxidized by the cupin-domain-containing oxidoreductase srdB to yield the epoxide, which can be hydrolyzed stereoselectively by the hydrolase srdG to give the final product sordarial. This Neurospora crassa (strain ATCC 24698 / 74-OR23-1A / CBS 708.71 / DSM 1257 / FGSC 987) protein is Short-chain dehydrogenase srdC.